We begin with the raw amino-acid sequence, 373 residues long: Ribosomal RNA small subunit methyltransferase H (373 aa).

Residues 92–94, Asp111, Tyr138, Asp159, and Gln166 contribute to the S-adenosyl-L-methionine site; that span reads GGH. Basic and acidic residues-rich tracts occupy residues 343-355 and 363-373; these read AERADEQEIERNP and RALEKVGGRGS. The disordered stretch occupies residues 343–373; sequence AERADEQEIERNPRSAPVRLRALEKVGGRGS.

The protein belongs to the methyltransferase superfamily. RsmH family.

It localises to the cytoplasm. The enzyme catalyses cytidine(1402) in 16S rRNA + S-adenosyl-L-methionine = N(4)-methylcytidine(1402) in 16S rRNA + S-adenosyl-L-homocysteine + H(+). Functionally, specifically methylates the N4 position of cytidine in position 1402 (C1402) of 16S rRNA. The sequence is that of Ribosomal RNA small subunit methyltransferase H from Mycolicibacterium smegmatis (strain ATCC 700084 / mc(2)155) (Mycobacterium smegmatis).